Here is a 599-residue protein sequence, read N- to C-terminus: Matrix metallopeptidase-21 (599 aa).

Residues 1–20 form the signal peptide; the sequence is MLTVIRRIFIIQTFIFITAE. Positions 21-170 are excised as a propeptide; that stretch reads KIFHSRDHSD…NHEHQAPVRK (150 aa). A Zn(2+)-binding site is contributed by cysteine 130. Residues 141-170 form a disordered region; it reads DVTGSNSTRNHIRTSTNTSHNHEHQAPVRK. Polar residues predominate over residues 143–159; that stretch reads TGSNSTRNHIRTSTNTS. A Zn(2+)-binding site is contributed by histidine 309. Residue glutamate 310 is part of the active site. Zn(2+) is bound by residues histidine 313 and histidine 319. A disulfide bridge links cysteine 355 with cysteine 586. Hemopexin repeat units follow at residues 356–415, 417–473, 474–522, and 529–585; these read TGRF…WHGL, SGGV…FPGV, SGPL…FPAI, and VRSL…WFDI. N-linked (GlcNAc...) asparagine glycosylation is present at asparagine 398.

Belongs to the peptidase M10A family. Post-translationally, the precursor is cleaved by a furin endopeptidase.

Its function is as follows. Plays a specialized role in the generation of left-right asymmetry during embryogenesis. May act as a negative regulator of the NOTCH-signaling pathway. The sequence is that of Matrix metallopeptidase-21 from Danio rerio (Zebrafish).